Reading from the N-terminus, the 408-residue chain is 8-amino-7-oxononanoate synthase (408 aa).

Substrate is bound at residue Arg20. Gly119–Tyr120 serves as a coordination point for pyridoxal 5'-phosphate. A substrate-binding site is contributed by His144. Pyridoxal 5'-phosphate contacts are provided by Ser190, His218, and Thr246. Lys249 is modified (N6-(pyridoxal phosphate)lysine). Thr372 is a binding site for substrate.

The protein belongs to the class-II pyridoxal-phosphate-dependent aminotransferase family. BioF subfamily. In terms of assembly, homodimer. Pyridoxal 5'-phosphate is required as a cofactor.

It carries out the reaction 6-carboxyhexanoyl-[ACP] + L-alanine + H(+) = (8S)-8-amino-7-oxononanoate + holo-[ACP] + CO2. It functions in the pathway cofactor biosynthesis; biotin biosynthesis. In terms of biological role, catalyzes the decarboxylative condensation of pimeloyl-[acyl-carrier protein] and L-alanine to produce 8-amino-7-oxononanoate (AON), [acyl-carrier protein], and carbon dioxide. This is 8-amino-7-oxononanoate synthase from Leptothrix cholodnii (strain ATCC 51168 / LMG 8142 / SP-6) (Leptothrix discophora (strain SP-6)).